A 248-amino-acid polypeptide reads, in one-letter code: ATP synthase subunit a (248 aa).

The next 6 helical transmembrane spans lie at 34–54, 91–111, 121–141, 147–167, 196–216, and 220–240; these read TNAT…LVFG, YFPY…LGLL, IAVT…LGFV, FLGL…LAVI, VFAA…AITA, and LEVL…CVYL.

It belongs to the ATPase A chain family. In terms of assembly, F-type ATPases have 2 components, CF(1) - the catalytic core - and CF(0) - the membrane proton channel. CF(1) has five subunits: alpha(3), beta(3), gamma(1), delta(1), epsilon(1). CF(0) has three main subunits: a(1), b(2) and c(9-12). The alpha and beta chains form an alternating ring which encloses part of the gamma chain. CF(1) is attached to CF(0) by a central stalk formed by the gamma and epsilon chains, while a peripheral stalk is formed by the delta and b chains.

The protein localises to the cell inner membrane. Key component of the proton channel; it plays a direct role in the translocation of protons across the membrane. This is ATP synthase subunit a from Paracoccus denitrificans (strain Pd 1222).